We begin with the raw amino-acid sequence, 156 residues long: 3-dehydroquinate dehydratase (156 aa).

Residue Tyr-24 is the Proton acceptor of the active site. Residues Asn-76, His-82, and Asp-89 each contribute to the substrate site. His-102 functions as the Proton donor in the catalytic mechanism. Residues 103–104 and Arg-113 each bind substrate; that span reads IS.

This sequence belongs to the type-II 3-dehydroquinase family. As to quaternary structure, homododecamer.

The catalysed reaction is 3-dehydroquinate = 3-dehydroshikimate + H2O. It participates in metabolic intermediate biosynthesis; chorismate biosynthesis; chorismate from D-erythrose 4-phosphate and phosphoenolpyruvate: step 3/7. In terms of biological role, catalyzes a trans-dehydration via an enolate intermediate. The sequence is that of 3-dehydroquinate dehydratase from Nitrobacter winogradskyi (strain ATCC 25391 / DSM 10237 / CIP 104748 / NCIMB 11846 / Nb-255).